Here is a 154-residue protein sequence, read N- to C-terminus: Transcriptional repressor NrdR (154 aa).

The segment at 3-34 (CPFCRHPDSRVVDSREADEGQAIRRRRSCPEC) is a zinc-finger region. Residues 46–136 (LSVVKRSGVT…VYRSFSSAED (91 aa)) enclose the ATP-cone domain.

It belongs to the NrdR family. Zn(2+) is required as a cofactor.

In terms of biological role, negatively regulates transcription of bacterial ribonucleotide reductase nrd genes and operons by binding to NrdR-boxes. In Rhodococcus jostii (strain RHA1), this protein is Transcriptional repressor NrdR.